Consider the following 189-residue polypeptide: Adenine phosphoribosyltransferase (189 aa).

This sequence belongs to the purine/pyrimidine phosphoribosyltransferase family. As to quaternary structure, homodimer.

The protein localises to the cytoplasm. It catalyses the reaction AMP + diphosphate = 5-phospho-alpha-D-ribose 1-diphosphate + adenine. It functions in the pathway purine metabolism; AMP biosynthesis via salvage pathway; AMP from adenine: step 1/1. Catalyzes a salvage reaction resulting in the formation of AMP, that is energically less costly than de novo synthesis. The protein is Adenine phosphoribosyltransferase of Frankia alni (strain DSM 45986 / CECT 9034 / ACN14a).